A 447-amino-acid chain; its full sequence is Probable glycine dehydrogenase (decarboxylating) subunit 1 (447 aa).

This sequence belongs to the GcvP family. N-terminal subunit subfamily. The glycine cleavage system is composed of four proteins: P, T, L and H. In this organism, the P 'protein' is a heterodimer of two subunits.

It catalyses the reaction N(6)-[(R)-lipoyl]-L-lysyl-[glycine-cleavage complex H protein] + glycine + H(+) = N(6)-[(R)-S(8)-aminomethyldihydrolipoyl]-L-lysyl-[glycine-cleavage complex H protein] + CO2. Its function is as follows. The glycine cleavage system catalyzes the degradation of glycine. The P protein binds the alpha-amino group of glycine through its pyridoxal phosphate cofactor; CO(2) is released and the remaining methylamine moiety is then transferred to the lipoamide cofactor of the H protein. The chain is Probable glycine dehydrogenase (decarboxylating) subunit 1 from Bacillus cereus (strain AH187).